A 334-amino-acid polypeptide reads, in one-letter code: Glycerol-3-phosphate dehydrogenase [NAD(P)+] (334 aa).

3 residues coordinate NADPH: W13, R33, and K106. Sn-glycerol 3-phosphate contacts are provided by K106, G137, and S139. Residue A141 participates in NADPH binding. Sn-glycerol 3-phosphate is bound by residues K192, D245, S255, R256, and N257. K192 (proton acceptor) is an active-site residue. R256 contacts NADPH. NADPH contacts are provided by V280 and E282.

The protein belongs to the NAD-dependent glycerol-3-phosphate dehydrogenase family.

It localises to the cytoplasm. It carries out the reaction sn-glycerol 3-phosphate + NAD(+) = dihydroxyacetone phosphate + NADH + H(+). The enzyme catalyses sn-glycerol 3-phosphate + NADP(+) = dihydroxyacetone phosphate + NADPH + H(+). The protein operates within membrane lipid metabolism; glycerophospholipid metabolism. Catalyzes the reduction of the glycolytic intermediate dihydroxyacetone phosphate (DHAP) to sn-glycerol 3-phosphate (G3P), the key precursor for phospholipid synthesis. The chain is Glycerol-3-phosphate dehydrogenase [NAD(P)+] from Chlamydia trachomatis serovar L2b (strain UCH-1/proctitis).